The chain runs to 419 residues: Transcription factor 7 (419 aa).

Over residues 1–12 the composition is skewed to gly residues; sequence MPQLDSGGGGAG. A CTNNB1-binding region spans residues 1–60; it reads MPQLDSGGGGAGRGDDLGAPDELLAFQDEGEEQDDKNRDSPVGPERDLAELKSSLVNESE. Disordered regions lie at residues 1–111 and 134–200; these read MPQL…LKAP and PASG…SGFY. Composition is skewed to basic and acidic residues over residues 35–50 and 86–109; these read DKNR…DLAE and LGRE…DGLK. Positions 143–158 are enriched in pro residues; the sequence is QPQPPLHNKPGQPPHG. The segment at residues 304-372 is a DNA-binding region (HMG box); sequence IKKPLNAFML…LHMQLYPGWS (69 aa). A disordered region spans residues 374–406; sequence RDNYGKKKRRSREKHQESTTGGKRNAFGTYPEK. The short motif at 379–385 is the Nuclear localization signal element; sequence KKKRRSR.

This sequence belongs to the TCF/LEF family. Binds the armadillo repeat of CTNNB1 and forms a stable complex. Binds TLE5, TLE1, TLE2, TLE3 and TLE4. Interacts with MLLT11. Interacts with DAZAP2. In terms of assembly, interacts (via N-terminus) with SOX13; inhibits WNT-mediated transcriptional activity. In terms of tissue distribution, T-cell specific. Expressed in triple negative 2 subpopulations of T-cells and both the gamma-delta and alpha-beta T-cell lineages. Expressed in Il7 receptor positive innate-like T-cells in the mesenteric lymph nodes and spleen (at protein level).

It localises to the nucleus. Its function is as follows. Transcriptional activator involved in T-cell lymphocyte differentiation. Necessary for the survival of CD4(+) CD8(+) immature thymocytes. Isoforms lacking the N-terminal CTNNB1 binding domain cannot fulfill this role. Binds to the T-lymphocyte-specific enhancer element (5'-WWCAAAG-3') found in the promoter of the CD3E gene. Represses expression of the T-cell receptor gamma gene in alpha-beta T-cell lineages. Inhibits the developmental program of IL17A effector gamma-delta T-cell subsets via regulating the transcription of T-cell lineage effector proteins. Required for the development of natural killer receptor-positive lymphoid tissue inducer T-cells. TLE1, TLE2, TLE3 and TLE4 repress transactivation mediated by TCF7 and CTNNB1. May also act as feedback transcriptional repressor of CTNNB1 and TCF7L2 target genes. This chain is Transcription factor 7, found in Mus musculus (Mouse).